The sequence spans 664 residues: Protein LYK5 (664 aa).

The N-terminal stretch at 1–26 (MAACTLHALSVTLFLLLFFAVSPAKA) is a signal peptide. The Extracellular portion of the chain corresponds to 27-277 (QQPYVNNHQL…DPPGSSSSHK (251 aa)). 5 N-linked (GlcNAc...) asparagine glycosylation sites follow: Asn45, Asn81, Asn111, Asn125, and Asn129. 3 disulfides stabilise this stretch: Cys52-Cys114, Cys58-Cys181, and Cys112-Cys179. Residue 135 to 141 (GDETYFS) coordinates chitin. Asn144 carries N-linked (GlcNAc...) asparagine glycosylation. 164 to 170 (ERQLTPG) lines the chitin pocket. Residues 195–238 (LTYLVAMGDSISGIAEMFNSTSAAITEGNELTSDNIFFFTPVLV) form the LysM domain. Asn213 carries an N-linked (GlcNAc...) asparagine glycan. A compositionally biased stretch (pro residues) spans 251 to 269 (PSPPPPPVVATPPQTPVDP). Residues 251–270 (PSPPPPPVVATPPQTPVDPP) are disordered. A helical membrane pass occupies residues 278 to 298 (WIYIGIGIGAGLLLLLSILAL). At 299–664 (CFYKRRSKKK…DLLRSGSLGN (366 aa)) the chain is on the cytoplasmic side. The region spanning 351-643 (KSAIESLTLY…TQVLTTLSMI (293 aa)) is the Protein kinase domain. ATP-binding positions include 357–365 (LTLYRFNDL) and Lys395.

It belongs to the protein kinase superfamily. Ser/Thr protein kinase family.

It is found in the cell membrane. In terms of biological role, may recognize microbe-derived N-acetylglucosamine (NAG)-containing ligands. This is Protein LYK5 (LYK5) from Arabidopsis thaliana (Mouse-ear cress).